The primary structure comprises 241 residues: Uridylate kinase (241 aa).

15 to 18 contacts ATP; sequence KLSG. Positions 23–28 are involved in allosteric activation by GTP; the sequence is GAEGFG. G57 is a UMP binding site. Residues G58 and R62 each coordinate ATP. UMP is bound by residues D77 and 138-145; that span reads TGNPFFTT. ATP-binding residues include T165, F171, and D174.

This sequence belongs to the UMP kinase family. In terms of assembly, homohexamer.

The protein localises to the cytoplasm. The catalysed reaction is UMP + ATP = UDP + ADP. It participates in pyrimidine metabolism; CTP biosynthesis via de novo pathway; UDP from UMP (UMPK route): step 1/1. Its activity is regulated as follows. Allosterically activated by GTP. Inhibited by UTP. Its function is as follows. Catalyzes the reversible phosphorylation of UMP to UDP. This Sodalis glossinidius (strain morsitans) protein is Uridylate kinase.